The primary structure comprises 136 residues: ATP synthase F(0) complex subunit C1, mitochondrial (136 aa).

Residues 1-61 (MQTTGALLIS…REFQTSVVSR (61 aa)) constitute a mitochondrion transit peptide. A helical transmembrane segment spans residues 77–97 (VGVAGSGAGIGTVFGSLIIGY). K104 bears the N6,N6,N6-trimethyllysine mark. The helical transmembrane segment at 112–132 (ILGFALSEAMGLFCLMVAFLI) threads the bilayer.

This sequence belongs to the ATPase C chain family. In terms of assembly, homooctamer; the c-ring consists of eight c subunits forming a circle, and each subunit adopts a hairpin shape. Component of the ATP synthase complex composed at least of ATP5F1A/subunit alpha, ATP5F1B/subunit beta, ATP5MC1/subunit c (homooctomer), MT-ATP6/subunit a, MT-ATP8/subunit 8, ATP5ME/subunit e, ATP5MF/subunit f, ATP5MG/subunit g, ATP5MK/subunit k, ATP5MJ/subunit j, ATP5F1C/subunit gamma, ATP5F1D/subunit delta, ATP5F1E/subunit epsilon, ATP5PF/subunit F6, ATP5PB/subunit b, ATP5PD/subunit d, ATP5PO/subunit OSCP. ATP synthase complex consists of a soluble F(1) head domain (subunits alpha(3) and beta(3)) - the catalytic core - and a membrane F(0) domain - the membrane proton channel (subunits c, a, 8, e, f, g, k and j). These two domains are linked by a central stalk (subunits gamma, delta, and epsilon) rotating inside the F1 region and a stationary peripheral stalk (subunits F6, b, d, and OSCP). Interacts with TMEM70 (homooligomer form); this interaction facilitates the oligomer formation of subunit c/ATP5MC1 (c-ring) and the c-ring membrane insertion and also protects ATP5MC1 against intramitochondrial proteolysis. In terms of processing, trimethylated by ATPSCKMT at Lys-104. Methylation is required for proper incorporation of the C subunit into the ATP synthase complex and mitochondrial respiration.

The protein resides in the mitochondrion membrane. It catalyses the reaction H(+)(in) = H(+)(out). Subunit c, of the mitochondrial membrane ATP synthase complex (F(1)F(0) ATP synthase or Complex V) that produces ATP from ADP in the presence of a proton gradient across the membrane which is generated by electron transport complexes of the respiratory chain. ATP synthase complex consist of a soluble F(1) head domain - the catalytic core - and a membrane F(1) domain - the membrane proton channel. These two domains are linked by a central stalk rotating inside the F(1) region and a stationary peripheral stalk. During catalysis, ATP synthesis in the catalytic domain of F(1) is coupled via a rotary mechanism of the central stalk subunits to proton translocation. With the subunit a (MT-ATP6), forms the proton-conducting channel in the F(0) domain, that contains two crucial half-channels (inlet and outlet) that facilitate proton movement from the mitochondrial intermembrane space (IMS) into the matrix. Protons are taken up via the inlet half-channel and released through the outlet half-channel, following a Grotthuss mechanism. The chain is ATP synthase F(0) complex subunit C1, mitochondrial from Bos taurus (Bovine).